Consider the following 293-residue polypeptide: Small ribosomal subunit biogenesis GTPase RsgA (293 aa).

The 161-residue stretch at 63-223 (KNWLVRPPIA…VADTPGFSAL (161 aa)) folds into the CP-type G domain. GTP-binding positions include 112–115 (NKMD) and 166–174 (GQSGVGKSS). Residues C247, C252, H254, and C260 each coordinate Zn(2+).

This sequence belongs to the TRAFAC class YlqF/YawG GTPase family. RsgA subfamily. In terms of assembly, monomer. Associates with 30S ribosomal subunit, binds 16S rRNA. It depends on Zn(2+) as a cofactor.

It localises to the cytoplasm. One of several proteins that assist in the late maturation steps of the functional core of the 30S ribosomal subunit. Helps release RbfA from mature subunits. May play a role in the assembly of ribosomal proteins into the subunit. Circularly permuted GTPase that catalyzes slow GTP hydrolysis, GTPase activity is stimulated by the 30S ribosomal subunit. The polypeptide is Small ribosomal subunit biogenesis GTPase RsgA (Geobacillus sp. (strain WCH70)).